A 428-amino-acid chain; its full sequence is Adenylosuccinate synthetase 1 (428 aa).

GTP contacts are provided by residues 12–18 (GDEGKGK) and 40–42 (GHT). Residue aspartate 13 is the Proton acceptor of the active site. Mg(2+) contacts are provided by aspartate 13 and glycine 40. IMP is bound by residues 13 to 16 (DEGK), 38 to 41 (NAGH), threonine 133, arginine 147, asparagine 224, threonine 239, and arginine 303. Residue histidine 41 is the Proton donor of the active site. 299 to 305 (TTTGRRR) is a substrate binding site. Residues arginine 305, 331–333 (KLD), and 413–415 (GVG) contribute to the GTP site.

It belongs to the adenylosuccinate synthetase family. As to quaternary structure, homodimer. Requires Mg(2+) as cofactor.

It localises to the cytoplasm. The enzyme catalyses IMP + L-aspartate + GTP = N(6)-(1,2-dicarboxyethyl)-AMP + GDP + phosphate + 2 H(+). It functions in the pathway purine metabolism; AMP biosynthesis via de novo pathway; AMP from IMP: step 1/2. Functionally, plays an important role in the de novo pathway and in the salvage pathway of purine nucleotide biosynthesis. Catalyzes the first committed step in the biosynthesis of AMP from IMP. This Laccaria bicolor (strain S238N-H82 / ATCC MYA-4686) (Bicoloured deceiver) protein is Adenylosuccinate synthetase 1.